The chain runs to 232 residues: Orotidine 5'-phosphate decarboxylase (232 aa).

Substrate contacts are provided by residues aspartate 11, lysine 32, 59–68 (DLKFHDIPNT), threonine 118, arginine 180, glutamine 189, glycine 209, and arginine 210. Catalysis depends on lysine 61, which acts as the Proton donor.

This sequence belongs to the OMP decarboxylase family. Type 1 subfamily. In terms of assembly, homodimer.

The enzyme catalyses orotidine 5'-phosphate + H(+) = UMP + CO2. It functions in the pathway pyrimidine metabolism; UMP biosynthesis via de novo pathway; UMP from orotate: step 2/2. In terms of biological role, catalyzes the decarboxylation of orotidine 5'-monophosphate (OMP) to uridine 5'-monophosphate (UMP). The chain is Orotidine 5'-phosphate decarboxylase from Gloeothece citriformis (strain PCC 7424) (Cyanothece sp. (strain PCC 7424)).